Consider the following 177-residue polypeptide: Ribosome maturation factor RimM (177 aa).

Residues 98–171 (GETIFLSEIK…AVVMDLPEGL (74 aa)) enclose the PRC barrel domain.

The protein belongs to the RimM family. Binds ribosomal protein uS19.

The protein localises to the cytoplasm. Functionally, an accessory protein needed during the final step in the assembly of 30S ribosomal subunit, possibly for assembly of the head region. Essential for efficient processing of 16S rRNA. May be needed both before and after RbfA during the maturation of 16S rRNA. It has affinity for free ribosomal 30S subunits but not for 70S ribosomes. This Bdellovibrio bacteriovorus (strain ATCC 15356 / DSM 50701 / NCIMB 9529 / HD100) protein is Ribosome maturation factor RimM.